We begin with the raw amino-acid sequence, 289 residues long: MIVLLYVTSLAICASGQPRANQAKGESYSPRYICSIPGLPGPPGPPGANGSPGPHGRIGLPGRDGRDGRKGEKGEKGTAGLKGKTGPLGLAGEKGDQGETGKKGPIGPEGEKGEVGPAGPPGPKGDRGDQGDPGLPGVCRCGSIVLKSAFSVGITTSYPEERLPIIFNKVLFNEGEHYNPATGKFICAFPGIYYFSYDITLANKHLAIGLVHNGQYRIRTFDANTGNHDVASGSTVIYLQPEDEVWLEIFFNDQNGLFSDPGWADSLFSGFLLYVDTDYLDSISEDDEL.

A signal peptide spans 1 to 16 (MIVLLYVTSLAICASG). The segment at 36–134 (IPGLPGPPGP…GDRGDQGDPG (99 aa)) is disordered. In terms of domain architecture, Collagen-like spans 38 to 139 (GLPGPPGPPG…QGDPGLPGVC (102 aa)). Positions 48–61 (ANGSPGPHGRIGLP) are enriched in low complexity. Basic and acidic residues predominate over residues 63-76 (RDGRDGRKGEKGEK). Positions 78–91 (TAGLKGKTGPLGLA) are enriched in low complexity. Basic and acidic residues predominate over residues 93–102 (EKGDQGETGK). The C1q domain occupies 143–279 (SIVLKSAFSV…GFLLYVDTDY (137 aa)).

The protein localises to the secreted. This chain is Complement C1q tumor necrosis factor-related protein 7 (C1qtnf7), found in Mus musculus (Mouse).